A 307-amino-acid polypeptide reads, in one-letter code: Lipoyl synthase (307 aa).

Cys55, Cys60, Cys66, Cys81, Cys85, Cys88, and Ser292 together coordinate [4Fe-4S] cluster. The 215-residue stretch at 67-281 (WEDREATFLI…ARHAEELGFS (215 aa)) folds into the Radical SAM core domain.

It belongs to the radical SAM superfamily. Lipoyl synthase family. It depends on [4Fe-4S] cluster as a cofactor.

The protein resides in the cytoplasm. It carries out the reaction [[Fe-S] cluster scaffold protein carrying a second [4Fe-4S](2+) cluster] + N(6)-octanoyl-L-lysyl-[protein] + 2 oxidized [2Fe-2S]-[ferredoxin] + 2 S-adenosyl-L-methionine + 4 H(+) = [[Fe-S] cluster scaffold protein] + N(6)-[(R)-dihydrolipoyl]-L-lysyl-[protein] + 4 Fe(3+) + 2 hydrogen sulfide + 2 5'-deoxyadenosine + 2 L-methionine + 2 reduced [2Fe-2S]-[ferredoxin]. It participates in protein modification; protein lipoylation via endogenous pathway; protein N(6)-(lipoyl)lysine from octanoyl-[acyl-carrier-protein]: step 2/2. Its function is as follows. Catalyzes the radical-mediated insertion of two sulfur atoms into the C-6 and C-8 positions of the octanoyl moiety bound to the lipoyl domains of lipoate-dependent enzymes, thereby converting the octanoylated domains into lipoylated derivatives. This Mycolicibacterium paratuberculosis (strain ATCC BAA-968 / K-10) (Mycobacterium paratuberculosis) protein is Lipoyl synthase.